The following is an 80-amino-acid chain: Exodeoxyribonuclease 7 small subunit (80 aa).

This sequence belongs to the XseB family. As to quaternary structure, heterooligomer composed of large and small subunits.

It localises to the cytoplasm. The enzyme catalyses Exonucleolytic cleavage in either 5'- to 3'- or 3'- to 5'-direction to yield nucleoside 5'-phosphates.. Bidirectionally degrades single-stranded DNA into large acid-insoluble oligonucleotides, which are then degraded further into small acid-soluble oligonucleotides. The sequence is that of Exodeoxyribonuclease 7 small subunit from Rickettsia africae (strain ESF-5).